The primary structure comprises 315 residues: NADH-ubiquinone oxidoreductase chain 1 (315 aa).

8 consecutive transmembrane segments (helical) span residues 6–26 (FILSLIGSLLLIICVLVSVAF), 80–100 (ISPIFSLFLSLFVWMCMPFFV), 107–127 (LGGLFFLCCTSLGVYTVMIAG), 153–173 (LALILLSFVFLIGSYNMMYFF), 177–197 (IYIWFLIILFPMALVWLTISL), 229–249 (LIFMAEYASILFMSMLFCVIF), 253–273 (DVFNLLFYVKLTFISFVFIWA), and 292–312 (CFLSFSLNYLLFFIGFKILLF).

Belongs to the complex I subunit 1 family.

It localises to the mitochondrion inner membrane. It carries out the reaction a ubiquinone + NADH + 5 H(+)(in) = a ubiquinol + NAD(+) + 4 H(+)(out). Its function is as follows. Core subunit of the mitochondrial membrane respiratory chain NADH dehydrogenase (Complex I) that is believed to belong to the minimal assembly required for catalysis. Complex I functions in the transfer of electrons from NADH to the respiratory chain. The immediate electron acceptor for the enzyme is believed to be ubiquinone. This is NADH-ubiquinone oxidoreductase chain 1 (mt:ND1) from Drosophila persimilis (Fruit fly).